The following is a 418-amino-acid chain: AP-3 complex subunit mu-1 (418 aa).

Positions 176 to 417 (NNEAYFDVVE…VTKAGKFQVR (242 aa)) constitute an MHD domain.

The protein belongs to the adaptor complexes medium subunit family. Adaptor protein complex 3 (AP-3) is a heterotetramer composed of two large adaptins (delta-type subunit AP3D1 and beta-type subunit AP3B1 or AP3B2), a medium adaptin (mu-type subunit AP3M1 or AP3M2) and a small adaptin (sigma-type subunit APS1 or AP3S2). Interacts with AGAP1. AP-3 associates with the BLOC-1 complex. In terms of assembly, (Microbial infection) Interacts with human respiratory virus (HRSV) matrix protein; this interaction plays an essential role in trafficking the matrix protein in host cells.

The protein localises to the golgi apparatus. The protein resides in the cytoplasmic vesicle membrane. Functionally, part of the AP-3 complex, an adaptor-related complex which is not clathrin-associated. The complex is associated with the Golgi region as well as more peripheral structures. It facilitates the budding of vesicles from the Golgi membrane and may be directly involved in trafficking to lysosomes. In concert with the BLOC-1 complex, AP-3 is required to target cargos into vesicles assembled at cell bodies for delivery into neurites and nerve terminals. This chain is AP-3 complex subunit mu-1 (AP3M1), found in Homo sapiens (Human).